We begin with the raw amino-acid sequence, 175 residues long: Transcription factor HES-3 (175 aa).

A bHLH domain is found at 1 to 49; it reads MEKKRRARINVSLEQLRSLLERHYSHQIRKRKLEKADILELSVKYMRSL. The region spanning 65 to 98 is the Orange domain; that stretch reads YPSGFQGGLRGVSQRLRPGEGDSGLRCPLLLQRR. The segment at 126–166 is disordered; sequence RAAGGSHSPQSPLPLPGGLLESSTDVVAPHPASNCQAESTR. Residues 129-148 show a composition bias toward low complexity; that stretch reads GGSHSPQSPLPLPGGLLESS. The WRPW motif motif lies at 172 to 175; that stretch reads WRPW.

Transcription repression requires formation of a complex with a corepressor protein of the Groucho/TLE family.

It localises to the nucleus. Its function is as follows. Transcriptional repressor of genes that require a bHLH protein for their transcription. The sequence is that of Transcription factor HES-3 (Hes3) from Mus musculus (Mouse).